The sequence spans 404 residues: Pleckstrin homology domain-containing family A member 1 (404 aa).

2 consecutive PH domains span residues 7–112 and 191–289; these read QNRI…KAIK and AVIK…GAIV. Disordered regions lie at residues 291-332 and 355-404; these read QRGP…RSNS and NFKV…VSDV. Positions 316 to 332 are enriched in low complexity; the sequence is TNAATATSHSTASRSNS. S332 and S362 each carry phosphoserine.

In terms of assembly, interacts with MPDZ and PTPN13. Highly expressed in skeletal muscle, thymus, pancreas, placenta and lung. Detected at low levels in brain, heart, peripheral blood leukocytes, testis, ovary, spinal cord, thyroid, kidney, liver, small intestine and colon.

The protein resides in the cytoplasm. Its subcellular location is the cell membrane. It is found in the nucleus. Binds specifically to phosphatidylinositol 3,4-diphosphate (PtdIns3,4P2), but not to other phosphoinositides. May recruit other proteins to the plasma membrane. The polypeptide is Pleckstrin homology domain-containing family A member 1 (PLEKHA1) (Homo sapiens (Human)).